The following is a 673-amino-acid chain: ATP-dependent zinc metalloprotease FtsH (673 aa).

The Cytoplasmic portion of the chain corresponds to 1–7; that stretch reads MNGFFKN. Residues 8 to 28 traverse the membrane as a helical segment; sequence LSLWLVIGLLMVMLFNLFNSP. Residues 29-100 are Periplasmic-facing; the sequence is QGPGQSITFS…DVREPEGTPM (72 aa). A helical transmembrane segment spans residues 101–121; it reads LMQILISWFPMLLLIAVWIYF. Over 122–673 the chain is Cytoplasmic; sequence MRQMQSGGGR…DTPEGDDKDR (552 aa). 194–201 is an ATP binding site; it reads GPPGTGKT. Zn(2+) is bound at residue H416. E417 is an active-site residue. H420 and D492 together coordinate Zn(2+). Residues 601-673 are disordered; sequence ALKPLKKKDE…DTPEGDDKDR (73 aa). Positions 648-660 are enriched in polar residues; that stretch reads STRTATEASTQEV. A compositionally biased stretch (basic and acidic residues) spans 661 to 673; the sequence is VSKDTPEGDDKDR.

In the central section; belongs to the AAA ATPase family. The protein in the C-terminal section; belongs to the peptidase M41 family. In terms of assembly, homohexamer. Zn(2+) serves as cofactor.

The protein resides in the cell inner membrane. Acts as a processive, ATP-dependent zinc metallopeptidase for both cytoplasmic and membrane proteins. Plays a role in the quality control of integral membrane proteins. The chain is ATP-dependent zinc metalloprotease FtsH from Magnetococcus marinus (strain ATCC BAA-1437 / JCM 17883 / MC-1).